The primary structure comprises 781 residues: MAKTPSDHLLSTLEELVPYDFEKFKFKLQNTSVQKEHSRIPRSQIQRARPVKMATLLVTYYGEEYAVQLTLQVLRAINQRLLAEELHRAAIQEYSTQENGTDDSAASSSLGENKPRSLKTPDHPEGNEGNGPRPYGGGAASLRCSQPEAGRGLSRKPLSKRREKASEGLDAQGKPRTRSPALPGGRSPGPCRALEGGQAEVRLRRNASSAGRLQGLAGGAPGQKECRPFEVYLPSGKMRPRSLEVTISTGEKAPANPEILLTLEEKTAANLDSATEPRARPTPDGGASADLKEGPGNPEHSVTGRPPDTAASPRCHAQEGDPVDGTCVRDSCSFPEAVSGHPQASGSRSPGCPRCQDSHERKSPGSLSPQPLPQCKRHLKQVQLLFCEDHDEPICLICSLSQEHQGHRVRPIEEVALEHKKKIQKQLEHLKKLRKSGEEQRSYGEEKAVSFLKQTEALKQRVQRKLEQVYYFLEQQEHFFVASLEDVGQMVGQIRKAYDTRVSQDIALLDALIGELEAKECQSEWELLQDIGDILHRAKTVPVPEKWTTPQEIKQKIQLLHQKSEFVEKSTKYFSETLRSEMEMFNVPELIGAQAHAVNVILDAETAYPNLIFSDDLKSVRLGNKWERLPDGPQRFDSCIIVLGSPSFLSGRRYWEVEVGDKTAWILGACKTSISRKGNMTLSPENGYWVVIMMKENEYQASSVPPTRLLIKEPPKRVGIFVDYRVGSISFYNVTARSHIYTFASCSFSGPLQPIFSPGTRDGGKNTAPLTICPVGGQGPD.

One can recognise a Pyrin domain in the interval 1 to 92; it reads MAKTPSDHLL…AEELHRAAIQ (92 aa). Over residues 93-111 the composition is skewed to polar residues; it reads EYSTQENGTDDSAASSSLG. The tract at residues 93 to 226 is disordered; the sequence is EYSTQENGTD…AGGAPGQKEC (134 aa). Positions 113–126 are enriched in basic and acidic residues; that stretch reads NKPRSLKTPDHPEG. Over residues 153–163 the composition is skewed to basic residues; that stretch reads LSRKPLSKRRE. Position 242 is a phosphoserine (Ser-242). The tract at residues 266-280 is interaction with RELA; that stretch reads KTAANLDSATEPRAR. Disordered regions lie at residues 270 to 322 and 336 to 373; these read NLDS…EGDP and EAVS…QPLP. The B box-type zinc-finger motif lies at 370–412; the sequence is QPLPQCKRHLKQVQLLFCEDHDEPICLICSLSQEHQGHRVRPI. Residues 413 to 442 adopt a coiled-coil conformation; it reads EEVALEHKKKIQKQLEHLKKLRKSGEEQRS. The short motif at 420 to 437 is the Nuclear localization signal element; the sequence is KKKIQKQLEHLKKLRKSG. The tract at residues 420 to 582 is required for homotrimerization and induction of pyroptosomes; that stretch reads KKKIQKQLEH…YFSETLRSEM (163 aa). The B30.2/SPRY domain occupies 580–775; that stretch reads SEMEMFNVPE…NTAPLTICPV (196 aa).

As to quaternary structure, homotrimer. Interacts (via the B box-type zinc finger) with PSTPIP1. Interacts (via the B30.2/SPRY domain) with several components of the inflammasome complex, including CASP1 p20 and p10 subunits, CASP5, PYCARD, NLRP1, NLRP2 and NLRP3, as well as with unprocessed IL1B; this interaction may lead to autophagic degradation of these proteins. Component of the AIM2 PANoptosome complex, a multiprotein complex that drives inflammatory cell death (PANoptosis). Interacts with NFKBIA and RELA. Interacts weakly with VASP and ACTR3. Interacts with active ULK1 (phosphorylated on 'Ser-317') and BECN1 simultaneously. Also interacts with ATG16L1 (via WD repeats), and with ATG8 family members, including GABARAP, GABARAPL1 and, to a lesser extent, GABARAPL2, MAP1LC3A/LC3A and MAP1LC3C/LC3C. Interacts with TRIM21. Interacts with YWHAB, YWHAE, YWHAG, YWHAH, YWHAQ and YWHAZ; the interaction is required for the down-regulation of pyrin pro-inflammatory activity. In terms of processing, cleaved by CASP1. The N-terminal cleavage product localizes to the nucleus as a filamentous network and to the cytoplasm, interacts more strongly with RELA and NFKBIA than the full-length protein, enhances the nuclear localization of RELA and induces NFKBIA proteolysis. The C-terminal cleavage product localizes to the cytoplasm. Post-translationally, phosphorylation at Ser-242 is required for the interaction with 14-3-3 proteins and down-regulation of pyrin pro-inflammatory activity. Degraded along with the delivery of its substrates to autolysosomal compartments (at protein level). Expressed in peripheral blood leukocytes, particularly in mature granulocytes and to a lesser extent in monocytes but not in lymphocytes. Detected in spleen, lung and muscle, probably as a result of leukocyte infiltration in these tissues. Not expressed in thymus, prostate, testis, ovary, small intestine, colon, heart, brain, placenta, liver, kidney, pancreas. Expression detected in several myeloid leukemic, colon cancer, and prostate cancer cell lines.

Its subcellular location is the cytoplasm. The protein localises to the cytoskeleton. It is found in the cell projection. It localises to the ruffle. The protein resides in the lamellipodium. Its subcellular location is the nucleus. The protein localises to the cytoplasmic vesicle. It is found in the autophagosome. Its function is as follows. Involved in the regulation of innate immunity and the inflammatory response in response to IFNG/IFN-gamma. Organizes autophagic machinery by serving as a platform for the assembly of ULK1, Beclin 1/BECN1, ATG16L1, and ATG8 family members and recognizes specific autophagy targets, thus coordinating target recognition with assembly of the autophagic apparatus and initiation of autophagy. Acts as an autophagy receptor for the degradation of several inflammasome components, including CASP1, NLRP1 and NLRP3, hence preventing excessive IL1B- and IL18-mediated inflammation. However, it can also have a positive effect in the inflammatory pathway, acting as an innate immune sensor that triggers PYCARD/ASC specks formation, caspase-1 activation, and IL1B and IL18 production. Together with AIM2, also acts as a mediator of pyroptosis, necroptosis and apoptosis (PANoptosis), an integral part of host defense against pathogens, in response to bacterial infection. It is required for PSTPIP1-induced PYCARD/ASC oligomerization and inflammasome formation. Recruits PSTPIP1 to inflammasomes, and is required for PSTPIP1 oligomerization. The sequence is that of Pyrin from Homo sapiens (Human).